The primary structure comprises 72 residues: Translation initiation factor IF-1 (72 aa).

Positions 1 to 72 (MAKEDNIEMQ…TKGRIVFRAR (72 aa)) constitute an S1-like domain.

The protein belongs to the IF-1 family. Component of the 30S ribosomal translation pre-initiation complex which assembles on the 30S ribosome in the order IF-2 and IF-3, IF-1 and N-formylmethionyl-tRNA(fMet); mRNA recruitment can occur at any time during PIC assembly.

It is found in the cytoplasm. One of the essential components for the initiation of protein synthesis. Stabilizes the binding of IF-2 and IF-3 on the 30S subunit to which N-formylmethionyl-tRNA(fMet) subsequently binds. Helps modulate mRNA selection, yielding the 30S pre-initiation complex (PIC). Upon addition of the 50S ribosomal subunit IF-1, IF-2 and IF-3 are released leaving the mature 70S translation initiation complex. The chain is Translation initiation factor IF-1 from Shewanella baltica (strain OS155 / ATCC BAA-1091).